The following is a 96-amino-acid chain: UPF0235 protein YggU (96 aa).

This sequence belongs to the UPF0235 family.

This chain is UPF0235 protein YggU, found in Salmonella arizonae (strain ATCC BAA-731 / CDC346-86 / RSK2980).